The primary structure comprises 453 residues: D-aminoacyl-tRNA deacylase (453 aa).

The disordered stretch occupies residues V428–N453.

Belongs to the DtdA deacylase family. In terms of assembly, monomer. Zn(2+) is required as a cofactor.

It catalyses the reaction a D-aminoacyl-tRNA + H2O = a tRNA + a D-alpha-amino acid + H(+). It carries out the reaction glycyl-tRNA(Ala) + H2O = tRNA(Ala) + glycine + H(+). D-aminoacyl-tRNA deacylase with broad substrate specificity. By recycling D-aminoacyl-tRNA to D-amino acids and free tRNA molecules, this enzyme counteracts the toxicity associated with the formation of D-aminoacyl-tRNA entities in vivo. The chain is D-aminoacyl-tRNA deacylase from Halobacterium salinarum (strain ATCC 29341 / DSM 671 / R1).